The chain runs to 342 residues: Methionyl-tRNA formyltransferase (342 aa).

Residue 108-111 participates in (6S)-5,6,7,8-tetrahydrofolate binding; the sequence is SLLP.

This sequence belongs to the Fmt family.

The catalysed reaction is L-methionyl-tRNA(fMet) + (6R)-10-formyltetrahydrofolate = N-formyl-L-methionyl-tRNA(fMet) + (6S)-5,6,7,8-tetrahydrofolate + H(+). In terms of biological role, attaches a formyl group to the free amino group of methionyl-tRNA(fMet). The formyl group appears to play a dual role in the initiator identity of N-formylmethionyl-tRNA by promoting its recognition by IF2 and preventing the misappropriation of this tRNA by the elongation apparatus. The polypeptide is Methionyl-tRNA formyltransferase (Prochlorococcus marinus (strain MIT 9313)).